Reading from the N-terminus, the 293-residue chain is Homoserine kinase (293 aa).

An ATP-binding site is contributed by 84–94 (PFSRGLGSSSS).

This sequence belongs to the GHMP kinase family. Homoserine kinase subfamily.

The protein localises to the cytoplasm. The catalysed reaction is L-homoserine + ATP = O-phospho-L-homoserine + ADP + H(+). The protein operates within amino-acid biosynthesis; L-threonine biosynthesis; L-threonine from L-aspartate: step 4/5. Functionally, catalyzes the ATP-dependent phosphorylation of L-homoserine to L-homoserine phosphate. The chain is Homoserine kinase from Campylobacter fetus subsp. fetus (strain 82-40).